The chain runs to 415 residues: MGRDETETYITVPSFFKCPISLDVMRSPVSLCTGVTYDRASIQRWLDGGNNTCPATMQLLKTKDFVPNLTLQRLINIWSDSIGRRHNGDSPVLNPPSGREVPTKEEVNVLLERLMSLENLMKIVRFVKDSDSNREFLSKKMEFVPMLVDIIRTKKTKIELVIMAIRILDSIKVDRERLSNLMLANDGGDCLTAILLAIQRGNLESKIESVRVLDWISFDAKSKLMIAERDGVLTEMMKSISITESSDPSLIEASLSFLITISKSKRVRSKLIAAKAITKIKDILLTETLTNVAVTEKSLKLLETLSSKREGRLEICGDDNGRCVEGVVKKLLKVSTTATEHAVTILWCLCYVFREDKTVEETVERSNGVTKLLVVIQSNCSAMVRQMAKDLIKVLKFNSSALAAYETKTTHIMPF.

Positions 11–85 (TVPSFFKCPI…NIWSDSIGRR (75 aa)) constitute a U-box domain. 2 ARM repeats span residues 221–263 (KSKL…TISK) and 265–307 (KRVR…TLSS).

As to quaternary structure, binds to SD129 and SD25.

The catalysed reaction is S-ubiquitinyl-[E2 ubiquitin-conjugating enzyme]-L-cysteine + [acceptor protein]-L-lysine = [E2 ubiquitin-conjugating enzyme]-L-cysteine + N(6)-ubiquitinyl-[acceptor protein]-L-lysine.. Its pathway is protein modification; protein ubiquitination. Functionally, functions as an E3 ubiquitin ligase. This is U-box domain-containing protein 29 (PUB29) from Arabidopsis thaliana (Mouse-ear cress).